A 423-amino-acid chain; its full sequence is POU domain, class 5, transcription factor 1.3 (423 aa).

The disordered stretch occupies residues 85–211 (GALSSGDPSP…GSGNEEDGTT (127 aa)). Over residues 94–110 (PEGRNEEDHGSISEERS) the composition is skewed to basic and acidic residues. 3 stretches are compositionally biased toward polar residues: residues 111 to 120 (SGTPSPNSPM), 156 to 173 (PQQSDCSPTASLESGASN), and 194 to 203 (PSPNNASFGS). Residues 207-281 (EDGTTLEEME…LLEQWLGEAE (75 aa)) form the POU-specific domain. Positions 301–360 (KRKMRTCFDSVLKGRLEGHFMCNQKPGARELAEIAKELGLEKDVVRVWFCNRRQKEKSKS) form a DNA-binding region, homeobox.

It belongs to the POU transcription factor family. Class-5 subfamily. As to quaternary structure, interacts with the transcription factors tcf7l1/tcf3 and vegt.

Its subcellular location is the nucleus. In terms of biological role, transcription factor that binds to the octamer motif (5'-ATTTGCAT-3'). Antagonizes the activity of nodal/activin signaling during gastrulation to suppress mesendoderm formation. Acts maternally to inhibit vegt and beta-catenin-activated gene transcription, probably by forming a transcriptional repression complex on the promoters of target genes. Binds to an octamer motif in interspersed RNA. This chain is POU domain, class 5, transcription factor 1.3 (pou5f1.3), found in Xenopus tropicalis (Western clawed frog).